The chain runs to 334 residues: Thiamine-binding periplasmic protein (334 aa).

An N-terminal signal peptide occupies residues 1–23; it reads MRLLSLLTFSLFAVIGLAPAAQA. Thiamine-binding positions include 64–65, 166–167, tryptophan 202, and 220–223; these read DG, AT, and YTTS.

It belongs to the bacterial solute-binding protein 1 family. As to quaternary structure, the complex is composed of two ATP-binding proteins (ThiQ), two transmembrane proteins (ThiP) and a solute-binding protein (ThiB).

It is found in the periplasm. Functionally, part of the ABC transporter complex ThiBPQ involved in thiamine import. The protein is Thiamine-binding periplasmic protein (thiB) of Brucella melitensis biotype 1 (strain ATCC 23456 / CCUG 17765 / NCTC 10094 / 16M).